We begin with the raw amino-acid sequence, 515 residues long: MGDWNLLGDTLEEVHIHSTMIGKIWLTILFIFRMLVLGVAAEDVWNDEQSGFICNTEQPGCRNVCYDQAFPISLIRYWVLQVIFVSSPSLVYMGHALYRLRVLEEERQRMKAQLRVELEEVEFEMPRDRRRLEQELCQLEKRKLNKAPLRGTLLCTYVIHIFTRSVVEVGFMIGQYLLYGFHLEPLFKCHGHPCPNIIDCFVSRPTEKTIFLLFMQSIATISLFLNILEIFHLGFKKIKRGLWGKYKLKKEHNEFHANKAKQNVAKYQSTSANSLKRLPSAPDYNLLVEKQTHTAVYPSLNSSSVFQPNPDNHSVNDEKCILDEQETVLSNEISTLSTSCSHFQHISSNNNKDTHKIFGKELNGNQLMEKRETEGKDSKRNYYSRGHRSIPGVAIDGENNMRQSPQTVFSLPANCDWKPRWLRATWGSSTEHENRGSPPKGNLKGQFRKGTVRTLPPSQGDSQSLDIPNTADSLGGLSFEPGLVRTCNNPVCPPNHVVSLTNNLIGRRVPTDLQI.

Residues 1–19 (MGDWNLLGDTLEEVHIHST) are Cytoplasmic-facing. A helical membrane pass occupies residues 20–40 (MIGKIWLTILFIFRMLVLGVA). Over 41–77 (AEDVWNDEQSGFICNTEQPGCRNVCYDQAFPISLIRY) the chain is Extracellular. Residues 78–98 (WVLQVIFVSSPSLVYMGHALY) traverse the membrane as a helical segment. Residues 99–166 (RLRVLEEERQ…YVIHIFTRSV (68 aa)) are Cytoplasmic-facing. A helical membrane pass occupies residues 167–187 (VEVGFMIGQYLLYGFHLEPLF). The Extracellular portion of the chain corresponds to 188–209 (KCHGHPCPNIIDCFVSRPTEKT). The helical transmembrane segment at 210 to 230 (IFLLFMQSIATISLFLNILEI) threads the bilayer. Residues 231–515 (FHLGFKKIKR…GRRVPTDLQI (285 aa)) are Cytoplasmic-facing. Residues 370 to 380 (KRETEGKDSKR) are compositionally biased toward basic and acidic residues. Disordered regions lie at residues 370–400 (KRETEGKDSKRNYYSRGHRSIPGVAIDGENN) and 428–472 (SSTE…NTAD). Residues 456–472 (PPSQGDSQSLDIPNTAD) show a composition bias toward polar residues.

It belongs to the connexin family. Alpha-type (group II) subfamily. As to quaternary structure, a connexon is composed of a hexamer of connexins. As to expression, highly abundant in skeletal muscle. Also detected in testis.

Its subcellular location is the cell membrane. It localises to the cell junction. It is found in the gap junction. In terms of biological role, one gap junction consists of a cluster of closely packed pairs of transmembrane channels, the connexons, through which materials of low MW diffuse from one cell to a neighboring cell. The chain is Gap junction alpha-9 protein (GJA9) from Homo sapiens (Human).